We begin with the raw amino-acid sequence, 456 residues long: E3 ubiquitin-protein ligase PUB24 (456 aa).

Positions 9–83 constitute a U-box domain; that stretch reads EIPNYFICPI…QHWCVENETR (75 aa).

In terms of processing, auto-ubiquitinated.

It catalyses the reaction S-ubiquitinyl-[E2 ubiquitin-conjugating enzyme]-L-cysteine + [acceptor protein]-L-lysine = [E2 ubiquitin-conjugating enzyme]-L-cysteine + N(6)-ubiquitinyl-[acceptor protein]-L-lysine.. Its pathway is protein modification; protein ubiquitination. Functionally, E3 ubiquitin-protein ligase that acts as a negative regulator of the immunity triggered by the pathogen-associated molecular patterns (PAMPs), in association with PUB22 and PUB23. This Arabidopsis thaliana (Mouse-ear cress) protein is E3 ubiquitin-protein ligase PUB24 (PUB24).